The sequence spans 238 residues: Sugar fermentation stimulation protein homolog (238 aa).

The protein belongs to the SfsA family.

In Alteromonas mediterranea (strain DSM 17117 / CIP 110805 / LMG 28347 / Deep ecotype), this protein is Sugar fermentation stimulation protein homolog.